A 196-amino-acid polypeptide reads, in one-letter code: Metalloproteinase inhibitor 2 (196 aa).

Residues 1–2 (RA) form the signal peptide. Cysteine 3 serves as a coordination point for Zn(2+). 2 involved in metalloproteinase-binding regions span residues 3 to 6 (CSCS) and 71 to 72 (SA). 6 disulfides stabilise this stretch: cysteine 3-cysteine 74, cysteine 5-cysteine 103, cysteine 15-cysteine 128, cysteine 130-cysteine 177, cysteine 135-cysteine 140, and cysteine 148-cysteine 169. The NTR domain maps to 3 to 128 (CSCSPVHPQQ…SLNHRYQMGC (126 aa)).

It belongs to the protease inhibitor I35 (TIMP) family. Interacts (via the C-terminal) with MMP2 (via the C-terminal PEX domain); the interaction inhibits the MMP2 activity. The activity of TIMP2 is dependent on the presence of disulfide bonds.

It localises to the secreted. Functionally, complexes with metalloproteinases (such as collagenases) and irreversibly inactivates them by binding to their catalytic zinc cofactor. This chain is Metalloproteinase inhibitor 2 (TIMP2), found in Cricetulus longicaudatus (Long-tailed dwarf hamster).